Here is a 339-residue protein sequence, read N- to C-terminus: uncharacterized protein (339 aa).

VOC domains lie at 2 to 127 (EFDY…VRSE) and 141 to 276 (TIDH…CLEI). Fe cation-binding residues include His-144, His-222, and Glu-306.

The protein belongs to the 4HPPD family. Fe cation serves as cofactor.

This is an uncharacterized protein from Synechocystis sp. (strain ATCC 27184 / PCC 6803 / Kazusa).